We begin with the raw amino-acid sequence, 212 residues long: Large ribosomal subunit protein uL4 (212 aa).

The segment covering 43 to 52 (NNRQGTASTK) has biased composition (polar residues). The disordered stretch occupies residues 43-77 (NNRQGTASTKTRSEVRGGGRKPWRQKGTGRARAGS). The segment covering 60–71 (GGRKPWRQKGTG) has biased composition (basic residues).

This sequence belongs to the universal ribosomal protein uL4 family. In terms of assembly, part of the 50S ribosomal subunit.

In terms of biological role, one of the primary rRNA binding proteins, this protein initially binds near the 5'-end of the 23S rRNA. It is important during the early stages of 50S assembly. It makes multiple contacts with different domains of the 23S rRNA in the assembled 50S subunit and ribosome. Its function is as follows. Forms part of the polypeptide exit tunnel. This chain is Large ribosomal subunit protein uL4, found in Trichodesmium erythraeum (strain IMS101).